Consider the following 75-residue polypeptide: MARFYRRRKFCRFTAENVAYIDYKDIDTLKQYITENGKIVPSRITGTKARYQRQLALAIKQARYLSLIPYTDNHK.

Belongs to the bacterial ribosomal protein bS18 family. As to quaternary structure, part of the 30S ribosomal subunit. Forms a tight heterodimer with protein bS6.

Its function is as follows. Binds as a heterodimer with protein bS6 to the central domain of the 16S rRNA, where it helps stabilize the platform of the 30S subunit. This chain is Small ribosomal subunit protein bS18, found in Acinetobacter baumannii (strain AB307-0294).